The following is a 163-amino-acid chain: Cyanate hydratase (163 aa).

Catalysis depends on residues Arg-103, Glu-106, and Ser-129.

The protein belongs to the cyanase family.

It carries out the reaction cyanate + hydrogencarbonate + 3 H(+) = NH4(+) + 2 CO2. Its function is as follows. Catalyzes the reaction of cyanate with bicarbonate to produce ammonia and carbon dioxide. This Paracoccidioides brasiliensis (strain Pb18) protein is Cyanate hydratase.